The sequence spans 848 residues: Beta-galactosidase 13 (848 aa).

The N-terminal stretch at 1–27 (MKIHSSDHSWLLLAVLVILLSFSGALS) is a signal peptide. An N-linked (GlcNAc...) asparagine glycan is attached at asparagine 107. Glutamate 200 serves as the catalytic Proton donor. The Nucleophile role is filled by glutamate 271. Asparagine 272, asparagine 303, asparagine 376, asparagine 398, asparagine 782, asparagine 787, and asparagine 817 each carry an N-linked (GlcNAc...) asparagine glycan. Positions 754–843 (DDVHLTANLK…KKLAVQVKCG (90 aa)) constitute an SUEL-type lectin domain.

The protein belongs to the glycosyl hydrolase 35 family. As to expression, ubiquitous, with higher expression levels in roots, flowers and siliques.

It localises to the secreted. The protein localises to the extracellular space. Its subcellular location is the apoplast. It carries out the reaction Hydrolysis of terminal non-reducing beta-D-galactose residues in beta-D-galactosides.. The chain is Beta-galactosidase 13 (BGAL13) from Arabidopsis thaliana (Mouse-ear cress).